The following is a 236-amino-acid chain: Ribonuclease PH (236 aa).

Residues Arg86 and 124 to 126 each bind phosphate; that span reads GTR.

This sequence belongs to the RNase PH family. As to quaternary structure, homohexameric ring arranged as a trimer of dimers.

The catalysed reaction is tRNA(n+1) + phosphate = tRNA(n) + a ribonucleoside 5'-diphosphate. Functionally, phosphorolytic 3'-5' exoribonuclease that plays an important role in tRNA 3'-end maturation. Removes nucleotide residues following the 3'-CCA terminus of tRNAs; can also add nucleotides to the ends of RNA molecules by using nucleoside diphosphates as substrates, but this may not be physiologically important. Probably plays a role in initiation of 16S rRNA degradation (leading to ribosome degradation) during starvation. In Thermodesulfovibrio yellowstonii (strain ATCC 51303 / DSM 11347 / YP87), this protein is Ribonuclease PH.